A 434-amino-acid chain; its full sequence is Serine--tRNA ligase (434 aa).

230–232 (TSE) is an L-serine binding site. Residues 261 to 263 (RRE) and Val277 contribute to the ATP site. Glu284 contributes to the L-serine binding site. 348–351 (ELTS) provides a ligand contact to ATP. Thr393 is a binding site for L-serine.

It belongs to the class-II aminoacyl-tRNA synthetase family. Type-1 seryl-tRNA synthetase subfamily. Homodimer. The tRNA molecule binds across the dimer.

Its subcellular location is the cytoplasm. The enzyme catalyses tRNA(Ser) + L-serine + ATP = L-seryl-tRNA(Ser) + AMP + diphosphate + H(+). It catalyses the reaction tRNA(Sec) + L-serine + ATP = L-seryl-tRNA(Sec) + AMP + diphosphate + H(+). It participates in aminoacyl-tRNA biosynthesis; selenocysteinyl-tRNA(Sec) biosynthesis; L-seryl-tRNA(Sec) from L-serine and tRNA(Sec): step 1/1. Catalyzes the attachment of serine to tRNA(Ser). Is also able to aminoacylate tRNA(Sec) with serine, to form the misacylated tRNA L-seryl-tRNA(Sec), which will be further converted into selenocysteinyl-tRNA(Sec). In Kocuria rhizophila (strain ATCC 9341 / DSM 348 / NBRC 103217 / DC2201), this protein is Serine--tRNA ligase.